The primary structure comprises 509 residues: Galactose-1-phosphate uridylyltransferase (509 aa).

Belongs to the galactose-1-phosphate uridylyltransferase type 2 family.

The protein localises to the cytoplasm. The enzyme catalyses alpha-D-galactose 1-phosphate + UDP-alpha-D-glucose = alpha-D-glucose 1-phosphate + UDP-alpha-D-galactose. It participates in carbohydrate metabolism; galactose metabolism. This chain is Galactose-1-phosphate uridylyltransferase, found in Fusobacterium nucleatum subsp. nucleatum (strain ATCC 25586 / DSM 15643 / BCRC 10681 / CIP 101130 / JCM 8532 / KCTC 2640 / LMG 13131 / VPI 4355).